The primary structure comprises 569 residues: Arginine--tRNA ligase (569 aa).

The short motif at 128–138 (ANPTGPLHVGH) is the 'HIGH' region element.

The protein belongs to the class-I aminoacyl-tRNA synthetase family. Monomer.

It localises to the cytoplasm. The catalysed reaction is tRNA(Arg) + L-arginine + ATP = L-arginyl-tRNA(Arg) + AMP + diphosphate. This chain is Arginine--tRNA ligase, found in Paracidovorax citrulli (strain AAC00-1) (Acidovorax citrulli).